A 475-amino-acid chain; its full sequence is Ribulose bisphosphate carboxylase large chain (475 aa).

The propeptide occupies 1-2; sequence MS. Residue Pro-3 is modified to N-acetylproline. Lys-14 bears the N6,N6,N6-trimethyllysine mark. The substrate site is built by Asn-123 and Thr-173. Lys-175 serves as the catalytic Proton acceptor. Residue Lys-177 coordinates substrate. Mg(2+) contacts are provided by Lys-201, Asp-203, and Glu-204. N6-carboxylysine is present on Lys-201. Residue His-294 is the Proton acceptor of the active site. The substrate site is built by Arg-295, His-327, and Ser-379.

The protein belongs to the RuBisCO large chain family. Type I subfamily. As to quaternary structure, heterohexadecamer of 8 large chains and 8 small chains. Requires Mg(2+) as cofactor.

The protein resides in the plastid. It localises to the chloroplast. It catalyses the reaction 2 (2R)-3-phosphoglycerate + 2 H(+) = D-ribulose 1,5-bisphosphate + CO2 + H2O. The enzyme catalyses D-ribulose 1,5-bisphosphate + O2 = 2-phosphoglycolate + (2R)-3-phosphoglycerate + 2 H(+). Its function is as follows. RuBisCO catalyzes two reactions: the carboxylation of D-ribulose 1,5-bisphosphate, the primary event in carbon dioxide fixation, as well as the oxidative fragmentation of the pentose substrate in the photorespiration process. Both reactions occur simultaneously and in competition at the same active site. This chain is Ribulose bisphosphate carboxylase large chain, found in Bazzania trilobata (Greater whipwort).